The primary structure comprises 233 residues: Glucosamine-6-phosphate deaminase (233 aa).

The Proton acceptor; for enolization step role is filled by aspartate 62. Asparagine 128 functions as the For ring-opening step in the catalytic mechanism. The active-site Proton acceptor; for ring-opening step is histidine 130. The For ring-opening step role is filled by glutamate 135.

The protein belongs to the glucosamine/galactosamine-6-phosphate isomerase family. NagB subfamily.

The enzyme catalyses alpha-D-glucosamine 6-phosphate + H2O = beta-D-fructose 6-phosphate + NH4(+). The protein operates within amino-sugar metabolism; N-acetylneuraminate degradation; D-fructose 6-phosphate from N-acetylneuraminate: step 5/5. Catalyzes the reversible isomerization-deamination of glucosamine 6-phosphate (GlcN6P) to form fructose 6-phosphate (Fru6P) and ammonium ion. The chain is Glucosamine-6-phosphate deaminase from Enterococcus faecalis (strain ATCC 700802 / V583).